The following is a 305-amino-acid chain: uncharacterized protein (305 aa).

Belongs to the IIV-6 436R family.

This is an uncharacterized protein from Acheta domesticus (House cricket).